Here is a 296-residue protein sequence, read N- to C-terminus: Light-independent protochlorophyllide reductase iron-sulfur ATP-binding protein (296 aa).

The segment at 1 to 20 (MTTTLSRPTDGEGSVQVQQD) is disordered. Residues 39-44 (GIGKST) and lysine 68 each bind ATP. Serine 43 is a Mg(2+) binding site. 2 residues coordinate [4Fe-4S] cluster: cysteine 124 and cysteine 158. 209-210 (NR) serves as a coordination point for ATP.

This sequence belongs to the NifH/BchL/ChlL family. Homodimer. Protochlorophyllide reductase is composed of three subunits; ChlL, ChlN and ChlB. It depends on [4Fe-4S] cluster as a cofactor.

It catalyses the reaction chlorophyllide a + oxidized 2[4Fe-4S]-[ferredoxin] + 2 ADP + 2 phosphate = protochlorophyllide a + reduced 2[4Fe-4S]-[ferredoxin] + 2 ATP + 2 H2O. The protein operates within porphyrin-containing compound metabolism; chlorophyll biosynthesis (light-independent). Component of the dark-operative protochlorophyllide reductase (DPOR) that uses Mg-ATP and reduced ferredoxin to reduce ring D of protochlorophyllide (Pchlide) to form chlorophyllide a (Chlide). This reaction is light-independent. The L component serves as a unique electron donor to the NB-component of the complex, and binds Mg-ATP. In Synechococcus sp. (strain CC9902), this protein is Light-independent protochlorophyllide reductase iron-sulfur ATP-binding protein.